The following is a 492-amino-acid chain: MVVSKSSPLIFERSKKGRYAYSLPKKEIDNGAVEKLLDDKFIRKNKAELPEVAELDLVRHYTELSNKNFGVDSGFYPLGSCTMKYNPKINEKIARIPGFAESHPLQDESQVQGSLEIIHSLQEELKEITGMDEVTLQPAAGAHGEWTALMIFKAFHQKNGEGHRDEVIVPDSAHGTNPASAAFAGFKAVTVKSNERGEVDIDDLKRVVNENTAAIMLTNPNTLGIFEKNIMDIRNIVHEAGGLLYYDGANLNAIMDKVRPGDMGFDAVHLNLHKTFTGPHGGGGPGSGPVGVKKELASFLPKPMVVKEDDVYKYDNDIENSIGRVKPFYGNFGIYLRAYTYIRTMGNKGLEEVSEAAVLNANYIKARLKDHFEIPYPQYCKHEFVLSGSKQKEHGVRTLDMAKRLLDFGVHPPTIYFPLNVEEGMMIEPTETESKETLDYFCDKMIEIANEAKEDPDKVLEAPHTTIIDRLDETKAARQPVLKFENLRSEKE.

Lys274 is subject to N6-(pyridoxal phosphate)lysine.

Belongs to the GcvP family. C-terminal subunit subfamily. The glycine cleavage system is composed of four proteins: P, T, L and H. In this organism, the P 'protein' is a heterodimer of two subunits. Requires pyridoxal 5'-phosphate as cofactor.

The catalysed reaction is N(6)-[(R)-lipoyl]-L-lysyl-[glycine-cleavage complex H protein] + glycine + H(+) = N(6)-[(R)-S(8)-aminomethyldihydrolipoyl]-L-lysyl-[glycine-cleavage complex H protein] + CO2. Its function is as follows. The glycine cleavage system catalyzes the degradation of glycine. The P protein binds the alpha-amino group of glycine through its pyridoxal phosphate cofactor; CO(2) is released and the remaining methylamine moiety is then transferred to the lipoamide cofactor of the H protein. The sequence is that of Probable glycine dehydrogenase (decarboxylating) subunit 2 from Staphylococcus saprophyticus subsp. saprophyticus (strain ATCC 15305 / DSM 20229 / NCIMB 8711 / NCTC 7292 / S-41).